The following is a 312-amino-acid chain: MEDIIKTLPQHTCSFLKQRFTLYKYQDVWNHQEFLEGRMLSEQTFKAHPNDVFLASYPKSGTTWLKALAFAIITREKFDDSTSPLLTTMPHDCIPLLEKDLEKIQENQRNSLYTPISTHFHYKSLPESARTSNCKIVYIYRNMKDVIVSYYHFLRQIVKLSVEEAPFEEAVDEFCQGISSCGPYWEHILGYWKASLEKPEIFLFLKYEDMKKDPVPSVKKLADFIGHPFTPKEEEAGVIENIIKLCSFEKLSSLEVNKSGMHRPEEAHSIENRLYFRKGKDGDWKNYFTDEMIEKIDKLIDEKLGATGLVLK.

59 to 64 serves as a coordination point for 3'-phosphoadenylyl sulfate; that stretch reads KSGTTW. The active-site Proton acceptor is the His119. 3'-phosphoadenylyl sulfate contacts are provided by residues Arg141, Ser149, Tyr207, and 277-279; that span reads RKG.

The protein belongs to the sulfotransferase 1 family. As to expression, highest in shoot tips and lowest in mature leaves and roots.

It localises to the cytoplasm. Functionally, sulfotransferase that utilizes 3'-phospho-5'-adenylyl sulfate (PAPS) as sulfonate donor to catalyze the sulfate conjugation of quercetin, rhamnetin and isorhamnetin but not kaempferol. O-sulfation of position 3 of flavonol. May play a role in auxin transport. The protein is Flavonol 3-sulfotransferase of Flaveria bidentis (Coastal plain yellowtops).